A 510-amino-acid polypeptide reads, in one-letter code: Probable lysine--tRNA ligase, cytoplasmic (510 aa).

It belongs to the class-II aminoacyl-tRNA synthetase family. In terms of assembly, homodimer.

Its subcellular location is the cytoplasm. The catalysed reaction is tRNA(Lys) + L-lysine + ATP = L-lysyl-tRNA(Lys) + AMP + diphosphate. The polypeptide is Probable lysine--tRNA ligase, cytoplasmic (Encephalitozoon cuniculi (strain GB-M1) (Microsporidian parasite)).